A 167-amino-acid polypeptide reads, in one-letter code: 2-amino-4-hydroxy-6-hydroxymethyldihydropteridine pyrophosphokinase (167 aa).

The protein belongs to the HPPK family.

The catalysed reaction is 6-hydroxymethyl-7,8-dihydropterin + ATP = (7,8-dihydropterin-6-yl)methyl diphosphate + AMP + H(+). It functions in the pathway cofactor biosynthesis; tetrahydrofolate biosynthesis; 2-amino-4-hydroxy-6-hydroxymethyl-7,8-dihydropteridine diphosphate from 7,8-dihydroneopterin triphosphate: step 4/4. Functionally, catalyzes the transfer of pyrophosphate from adenosine triphosphate (ATP) to 6-hydroxymethyl-7,8-dihydropterin, an enzymatic step in folate biosynthesis pathway. The protein is 2-amino-4-hydroxy-6-hydroxymethyldihydropteridine pyrophosphokinase (folK) of Bacillus subtilis (strain 168).